A 775-amino-acid chain; its full sequence is Endothelin-converting enzyme-like 1 (775 aa).

The Cytoplasmic portion of the chain corresponds to 1 to 59; that stretch reads MEPPYSLTAHYDEFQEVKYVSRCGAGGARGASLPPGFPLGAARSATGARSGLPRWNRRE. The chain crosses the membrane as a helical; Signal-anchor for type II membrane protein span at residues 60-82; sequence VCLLSGLVFAAGLCAILAAMLAL. The Lumenal segment spans residues 83–775; it reads KYLGPVAAGG…MNPAHKCSVW (693 aa). A Peptidase M13 domain is found at 98–775; the sequence is GCPERKAFAR…MNPAHKCSVW (678 aa). Intrachain disulfides connect Cys123-Cys760, Cys131-Cys720, Cys187-Cys441, and Cys649-Cys772. N-linked (GlcNAc...) asparagine glycans are attached at residues Asn255 and Asn322. A Zn(2+)-binding site is contributed by His612. The active site involves Glu613. His616 is a binding site for Zn(2+). Asn656 carries an N-linked (GlcNAc...) asparagine glycan. A Zn(2+)-binding site is contributed by Glu672. Asp676 serves as the catalytic Proton donor.

Belongs to the peptidase M13 family. Zn(2+) is required as a cofactor. Post-translationally, N-glycosylated. As to expression, highly expressed in the CNS, in particular in putamen, spinal cord, medulla and subthalamic nucleus. A strong signal was also detected in uterine subepithelial cells and around renal blood vessels. Detected at lower levels in amygdala, caudate, thalamus, pancreas and skeletal muscle. Detected at very low levels in substantia nigra, cerebellum, cortex, corpus callosum and hippocampus.

Its subcellular location is the membrane. May contribute to the degradation of peptide hormones and be involved in the inactivation of neuronal peptides. This chain is Endothelin-converting enzyme-like 1 (ECEL1), found in Homo sapiens (Human).